The sequence spans 121 residues: Transposase InsC for insertion element IS2A (121 aa).

Belongs to the transposase 8 family.

In terms of biological role, involved in the transposition of the insertion sequence IS2. This chain is Transposase InsC for insertion element IS2A (insC1), found in Escherichia coli (strain K12).